Here is a 70-residue protein sequence, read N- to C-terminus: Drosomycin (70 aa).

A signal peptide spans 1 to 20 (MMQIKYLFALFAVLMLVVLG). Positions 21-26 (ANEADA) are excised as a propeptide. Disulfide bonds link Cys-28–Cys-70, Cys-37–Cys-59, Cys-45–Cys-65, and Cys-49–Cys-67. Asn-42 is a glycosylation site (N-linked (GlcNAc...) asparagine).

In terms of tissue distribution, hemolymph (at protein level). Synthesized in the fat body and is secreted into the blood. In larvae, expressed in the visceral branches and posterior spiracles of the trachea.

The protein localises to the secreted. Its function is as follows. Possesses antifungal activity and is active against a relatively broad spectrum of filamentous fungi. It inhibits spore germination at high concentrations and at low concentrations delays growth of hyphae which subsequently exhibit abnormal morphology. Spz C-106 in the hemolymph controls expression of the antifungal peptide by acting as a ligand of Tl and inducing an intracellular signaling pathway. Part of a psh-dependent Toll pathway, which may function in activating the systematic immune response in response to localized melanization of the tracheal system. In Drosophila melanogaster (Fruit fly), this protein is Drosomycin (Drs).